Reading from the N-terminus, the 552-residue chain is Urocanate hydratase (552 aa).

NAD(+) is bound by residues 49-50 (GG), Q127, 173-175 (GMG), D193, 239-240 (NA), 260-264 (QTSAH), 270-271 (YI), and Y319. Residue C407 is part of the active site. Residue G489 coordinates NAD(+).

Belongs to the urocanase family. NAD(+) serves as cofactor.

Its subcellular location is the cytoplasm. The enzyme catalyses 4-imidazolone-5-propanoate = trans-urocanate + H2O. Its pathway is amino-acid degradation; L-histidine degradation into L-glutamate; N-formimidoyl-L-glutamate from L-histidine: step 2/3. In terms of biological role, catalyzes the conversion of urocanate to 4-imidazolone-5-propionate. This is Urocanate hydratase from Bacillus cereus (strain ATCC 10987 / NRS 248).